The sequence spans 329 residues: Beta-ketoacyl-[acyl-carrier-protein] synthase III (329 aa).

Residues Cys-113 and His-255 contribute to the active site. Residues 256–260 (QANQR) are ACP-binding. Asn-285 is an active-site residue.

This sequence belongs to the thiolase-like superfamily. FabH family. In terms of assembly, homodimer.

The protein resides in the cytoplasm. It carries out the reaction malonyl-[ACP] + acetyl-CoA + H(+) = 3-oxobutanoyl-[ACP] + CO2 + CoA. It participates in lipid metabolism; fatty acid biosynthesis. Catalyzes the condensation reaction of fatty acid synthesis by the addition to an acyl acceptor of two carbons from malonyl-ACP. Catalyzes the first condensation reaction which initiates fatty acid synthesis and may therefore play a role in governing the total rate of fatty acid production. Possesses both acetoacetyl-ACP synthase and acetyl transacylase activities. Its substrate specificity determines the biosynthesis of branched-chain and/or straight-chain of fatty acids. This is Beta-ketoacyl-[acyl-carrier-protein] synthase III from Chlorobium luteolum (strain DSM 273 / BCRC 81028 / 2530) (Pelodictyon luteolum).